Consider the following 442-residue polypeptide: tRNA modification GTPase MnmE (442 aa).

(6S)-5-formyl-5,6,7,8-tetrahydrofolate is bound by residues arginine 27, glutamate 84, and lysine 124. The TrmE-type G domain maps to 221–366; sequence GLHVVIVGAP…LLDALQAFAE (146 aa). GTP contacts are provided by residues 231–236, 250–256, and 275–278; these read NAGKSS, SKEAGTT, and DTAG. Mg(2+) is bound by residues serine 235 and threonine 256. Lysine 442 contributes to the (6S)-5-formyl-5,6,7,8-tetrahydrofolate binding site.

This sequence belongs to the TRAFAC class TrmE-Era-EngA-EngB-Septin-like GTPase superfamily. TrmE GTPase family. Homodimer. Heterotetramer of two MnmE and two MnmG subunits. It depends on K(+) as a cofactor.

It is found in the cytoplasm. Exhibits a very high intrinsic GTPase hydrolysis rate. Involved in the addition of a carboxymethylaminomethyl (cmnm) group at the wobble position (U34) of certain tRNAs, forming tRNA-cmnm(5)s(2)U34. The chain is tRNA modification GTPase MnmE from Brucella canis (strain ATCC 23365 / NCTC 10854 / RM-666).